Reading from the N-terminus, the 365-residue chain is Protein RecA (365 aa).

81–88 contacts ATP; the sequence is GPESSGKT.

It belongs to the RecA family.

The protein resides in the cytoplasm. Its function is as follows. Can catalyze the hydrolysis of ATP in the presence of single-stranded DNA, the ATP-dependent uptake of single-stranded DNA by duplex DNA, and the ATP-dependent hybridization of homologous single-stranded DNAs. It interacts with LexA causing its activation and leading to its autocatalytic cleavage. This chain is Protein RecA, found in Borreliella burgdorferi (strain ATCC 35210 / DSM 4680 / CIP 102532 / B31) (Borrelia burgdorferi).